The sequence spans 141 residues: NADH dehydrogenase [ubiquinone] 1 alpha subcomplex subunit 11 (141 aa).

The next 2 membrane-spanning stretches (helical) occupy residues 21-43 (KTYI…RVSL) and 58-80 (RYTF…SAQV).

The protein belongs to the complex I NDUFA11 subunit family. Complex I is composed of 45 different subunits.

The protein resides in the mitochondrion inner membrane. Its function is as follows. Accessory subunit of the mitochondrial membrane respiratory chain NADH dehydrogenase (Complex I), that is believed not to be involved in catalysis. Complex I functions in the transfer of electrons from NADH to the respiratory chain. The immediate electron acceptor for the enzyme is believed to be ubiquinone. The polypeptide is NADH dehydrogenase [ubiquinone] 1 alpha subcomplex subunit 11 (Ndufa11) (Mus musculus (Mouse)).